An 89-amino-acid polypeptide reads, in one-letter code: MAISKEKKNEIIAQYARHEGDTGSVEVQVAVLTWEINHLNGHIKEHKKDHATYRGLMKKIGHRRNLLAYLRRTDVNRYRELIQSLGLRR.

The protein belongs to the universal ribosomal protein uS15 family. As to quaternary structure, part of the 30S ribosomal subunit. Forms a bridge to the 50S subunit in the 70S ribosome, contacting the 23S rRNA.

One of the primary rRNA binding proteins, it binds directly to 16S rRNA where it helps nucleate assembly of the platform of the 30S subunit by binding and bridging several RNA helices of the 16S rRNA. In terms of biological role, forms an intersubunit bridge (bridge B4) with the 23S rRNA of the 50S subunit in the ribosome. This Streptococcus uberis (strain ATCC BAA-854 / 0140J) protein is Small ribosomal subunit protein uS15.